Here is a 304-residue protein sequence, read N- to C-terminus: Acetyl-coenzyme A carboxylase carboxyl transferase subunit beta (304 aa).

Positions 25–294 (LWIKCPETGE…KAVKRDTATE (270 aa)) constitute a CoA carboxyltransferase N-terminal domain.

Belongs to the AccD/PCCB family. Acetyl-CoA carboxylase is a heterohexamer composed of biotin carboxyl carrier protein (AccB), biotin carboxylase (AccC) and two subunits each of ACCase subunit alpha (AccA) and ACCase subunit beta (AccD).

It localises to the cytoplasm. It carries out the reaction N(6)-carboxybiotinyl-L-lysyl-[protein] + acetyl-CoA = N(6)-biotinyl-L-lysyl-[protein] + malonyl-CoA. It participates in lipid metabolism; malonyl-CoA biosynthesis; malonyl-CoA from acetyl-CoA: step 1/1. Functionally, component of the acetyl coenzyme A carboxylase (ACC) complex. Biotin carboxylase (BC) catalyzes the carboxylation of biotin on its carrier protein (BCCP) and then the CO(2) group is transferred by the transcarboxylase to acetyl-CoA to form malonyl-CoA. The sequence is that of Acetyl-coenzyme A carboxylase carboxyl transferase subunit beta from Rhizobium meliloti (strain 1021) (Ensifer meliloti).